The chain runs to 72 residues: Heat shock factor-binding protein 1-like protein 1 (72 aa).

A coiled-coil region spans residues 12–66; the sequence is DLLQNAAENLLQEVEEHFQALTATLNLRMEEMGNRIEDLQRNVDDLMAQAGIENS.

This sequence belongs to the HSBP1 family.

The protein is Heat shock factor-binding protein 1-like protein 1 (Hsbp1l1) of Rattus norvegicus (Rat).